Reading from the N-terminus, the 210-residue chain is Prolactin (210 aa).

The N-terminal stretch at 1 to 23 is a signal peptide; that stretch reads MARRSQGTKLHLAVLCLVVSCHA. Intrachain disulfides connect C69-C183 and C200-C210.

Belongs to the somatotropin/prolactin family.

The protein localises to the secreted. This is Prolactin (prl) from Oncorhynchus mykiss (Rainbow trout).